A 233-amino-acid chain; its full sequence is Large ribosomal subunit protein uL1 (233 aa).

This sequence belongs to the universal ribosomal protein uL1 family. In terms of assembly, part of the 50S ribosomal subunit.

Binds directly to 23S rRNA. The L1 stalk is quite mobile in the ribosome, and is involved in E site tRNA release. In terms of biological role, protein L1 is also a translational repressor protein, it controls the translation of the L11 operon by binding to its mRNA. This chain is Large ribosomal subunit protein uL1, found in Shewanella piezotolerans (strain WP3 / JCM 13877).